A 428-amino-acid chain; its full sequence is Kynureninase (428 aa).

Pyridoxal 5'-phosphate-binding positions include threonine 104, threonine 105, 132–135, aspartate 213, histidine 216, and tyrosine 238; that span reads FPSD. Lysine 239 is modified (N6-(pyridoxal phosphate)lysine). Pyridoxal 5'-phosphate is bound by residues tryptophan 267 and threonine 295.

The protein belongs to the kynureninase family. As to quaternary structure, homodimer. Pyridoxal 5'-phosphate is required as a cofactor.

The enzyme catalyses L-kynurenine + H2O = anthranilate + L-alanine + H(+). It catalyses the reaction 3-hydroxy-L-kynurenine + H2O = 3-hydroxyanthranilate + L-alanine + H(+). The protein operates within amino-acid degradation; L-kynurenine degradation; L-alanine and anthranilate from L-kynurenine: step 1/1. It participates in cofactor biosynthesis; NAD(+) biosynthesis; quinolinate from L-kynurenine: step 2/3. Catalyzes the cleavage of L-kynurenine (L-Kyn) and L-3-hydroxykynurenine (L-3OHKyn) into anthranilic acid (AA) and 3-hydroxyanthranilic acid (3-OHAA), respectively. This is Kynureninase from Bacillus anthracis.